Consider the following 251-residue polypeptide: Triosephosphate isomerase (251 aa).

Substrate is bound at residue 9 to 11 (NWK). The active-site Electrophile is H95. E167 functions as the Proton acceptor in the catalytic mechanism. Substrate-binding positions include G173, S213, and 234–235 (GG).

This sequence belongs to the triosephosphate isomerase family. As to quaternary structure, homodimer.

Its subcellular location is the cytoplasm. The catalysed reaction is D-glyceraldehyde 3-phosphate = dihydroxyacetone phosphate. The protein operates within carbohydrate biosynthesis; gluconeogenesis. It functions in the pathway carbohydrate degradation; glycolysis; D-glyceraldehyde 3-phosphate from glycerone phosphate: step 1/1. Functionally, involved in the gluconeogenesis. Catalyzes stereospecifically the conversion of dihydroxyacetone phosphate (DHAP) to D-glyceraldehyde-3-phosphate (G3P). This chain is Triosephosphate isomerase, found in Latilactobacillus sakei subsp. sakei (strain 23K) (Lactobacillus sakei subsp. sakei).